Here is a 539-residue protein sequence, read N- to C-terminus: Protein pim1 (539 aa).

The segment at 1-53 (MTSNRSTRSSTKREEVSKNGVEKRELDESDVMKNGKKPVKRAKVSSLPKPVRV) is disordered. Over residues 11 to 33 (TKREEVSKNGVEKRELDESDVMK) the composition is skewed to basic and acidic residues. Residues 34–43 (NGKKPVKRAK) are compositionally biased toward basic residues. RCC1 repeat units lie at residues 70–125 (RLNV…ALSH), 127–191 (GRVY…AITD), 192–243 (NGCC…ALTT), 244–296 (TGKV…AIDN), 298–353 (GRVY…ALLE), 354–417 (DGRV…AVTS), and 419–472 (GKVY…IAGI). Positions 478-539 (EPVANGIKSE…SVLEPSSTTA (62 aa)) are disordered. A compositionally biased stretch (basic and acidic residues) spans 486–504 (SEPENEKKLKTEETSKTDD). Positions 514–525 (VTSNGEPSTATS) are enriched in polar residues.

In terms of assembly, oligomer of dis3, pim1 and spi1. Interacts with ned1.

The protein resides in the nucleus. Functionally, promotes the exchange of Ran(spi1)-bound GDP by GTP. Involved in the control of mitosis. Regulates a variety of nuclear events, including mitotic check-point, chromosome decondensation and mRNA processing/transport. The protein is Protein pim1 (pim1) of Schizosaccharomyces pombe (strain 972 / ATCC 24843) (Fission yeast).